We begin with the raw amino-acid sequence, 200 residues long: Polyadenylate-binding protein 1-like 2 (200 aa).

RRM domains follow at residues 2–80 and 90–166; these read ASLY…WSQR and GNVF…RFKS. The tract at residues 170–200 is disordered; sequence REAERGAWARQSTSADVKDFEEDTDEEATLR. The segment covering 188–200 has biased composition (acidic residues); the sequence is DFEEDTDEEATLR.

This chain is Polyadenylate-binding protein 1-like 2 (PABPC1L2A), found in Homo sapiens (Human).